A 640-amino-acid chain; its full sequence is Fructose-1,6-bisphosphatase class 3 (640 aa).

It belongs to the FBPase class 3 family. The cofactor is Mn(2+).

It catalyses the reaction beta-D-fructose 1,6-bisphosphate + H2O = beta-D-fructose 6-phosphate + phosphate. It participates in carbohydrate biosynthesis; gluconeogenesis. The chain is Fructose-1,6-bisphosphatase class 3 from Lactococcus lactis subsp. cremoris (strain MG1363).